A 386-amino-acid polypeptide reads, in one-letter code: Patatin-14 (386 aa).

An N-terminal signal peptide occupies residues 1–23 (MATTKSFLILFFMILATTSSTCA). The region spanning 32-229 (LSIDGGGIKG…TVGDPALLSL (198 aa)) is the PNPLA domain. Positions 36 to 41 (GGGIKG) match the GXGXXG motif. Positions 75 to 79 (GTSTG) match the GXSXG motif. S77 functions as the Nucleophile in the catalytic mechanism. N-linked (GlcNAc...) asparagine glycosylation occurs at N115. D215 functions as the Proton acceptor in the catalytic mechanism. A DGA/G motif is present at residues 215-217 (DGG). The stretch at 321 to 381 (ENALTGTTTE…LLSDRKKLRA (61 aa)) forms a coiled coil.

Belongs to the patatin family. In terms of tissue distribution, tuber.

The protein localises to the vacuole. Functionally, probable lipolytic acyl hydrolase (LAH), an activity which is thought to be involved in the response of tubers to pathogens. The chain is Patatin-14 from Solanum tuberosum (Potato).